The sequence spans 860 residues: Leucine--tRNA ligase (860 aa).

Positions 42-52 (PYPSGRLHMGH) match the 'HIGH' region motif. Residues 619–623 (KMSKS) carry the 'KMSKS' region motif. Lys-622 lines the ATP pocket.

Belongs to the class-I aminoacyl-tRNA synthetase family.

It localises to the cytoplasm. The enzyme catalyses tRNA(Leu) + L-leucine + ATP = L-leucyl-tRNA(Leu) + AMP + diphosphate. The chain is Leucine--tRNA ligase from Salmonella paratyphi A (strain ATCC 9150 / SARB42).